The primary structure comprises 445 residues: Histidinol dehydrogenase (445 aa).

Tyrosine 130, glutamine 192, and asparagine 215 together coordinate NAD(+). Serine 238, glutamine 260, and histidine 263 together coordinate substrate. Residues glutamine 260 and histidine 263 each coordinate Zn(2+). Catalysis depends on proton acceptor residues glutamate 328 and histidine 329. Substrate is bound by residues histidine 329, aspartate 362, glutamate 416, and histidine 421. Residue aspartate 362 participates in Zn(2+) binding. Residue histidine 421 coordinates Zn(2+).

It belongs to the histidinol dehydrogenase family. Requires Zn(2+) as cofactor.

The catalysed reaction is L-histidinol + 2 NAD(+) + H2O = L-histidine + 2 NADH + 3 H(+). It participates in amino-acid biosynthesis; L-histidine biosynthesis; L-histidine from 5-phospho-alpha-D-ribose 1-diphosphate: step 9/9. In terms of biological role, catalyzes the sequential NAD-dependent oxidations of L-histidinol to L-histidinaldehyde and then to L-histidine. This is Histidinol dehydrogenase from Gloeobacter violaceus (strain ATCC 29082 / PCC 7421).